A 196-amino-acid chain; its full sequence is Late protein I196L (196 aa).

2 consecutive repeat copies span residues 28–48 (SNYLTTAIANNTSISPTTSSN) and 49–68 (HITTAIPNNTSILPTTSSNH). Residues 69–87 (ITTAISNNITDKDDYTHFS) form a 3; approximate repeat.

It belongs to the asfivirus I196L family.

The chain is Late protein I196L from Ornithodoros (relapsing fever ticks).